Reading from the N-terminus, the 31-residue chain is Palustrin-2c (31 aa).

Residues Cys23 and Cys29 are joined by a disulfide bond.

In terms of tissue distribution, expressed by the skin glands.

It localises to the secreted. Its function is as follows. Antimicrobial activity against Gram-negative bacterium E.coli. The polypeptide is Palustrin-2c (Lithobates palustris (Pickerel frog)).